The following is a 404-amino-acid chain: S-adenosylmethionine synthase (404 aa).

Polar residues predominate over residues 1 to 13; that stretch reads MSQSRYFFTSESV. The tract at residues 1–20 is disordered; it reads MSQSRYFFTSESVSEGHPDK. Position 17 (histidine 17) interacts with ATP. Mg(2+) is bound at residue aspartate 19. Glutamate 45 contributes to the K(+) binding site. L-methionine is bound by residues glutamate 58 and glutamine 101. The interval 101–111 is flexible loop; sequence QSPDINRGVDR. ATP-binding positions include 172 to 174, 245 to 246, aspartate 254, 260 to 261, alanine 277, and lysine 281; these read DAK, RF, and RK. Aspartate 254 is a binding site for L-methionine. Lysine 285 is a binding site for L-methionine.

Belongs to the AdoMet synthase family. In terms of assembly, homotetramer; dimer of dimers. Mg(2+) is required as a cofactor. Requires K(+) as cofactor.

The protein resides in the cytoplasm. It catalyses the reaction L-methionine + ATP + H2O = S-adenosyl-L-methionine + phosphate + diphosphate. The protein operates within amino-acid biosynthesis; S-adenosyl-L-methionine biosynthesis; S-adenosyl-L-methionine from L-methionine: step 1/1. In terms of biological role, catalyzes the formation of S-adenosylmethionine (AdoMet) from methionine and ATP. The overall synthetic reaction is composed of two sequential steps, AdoMet formation and the subsequent tripolyphosphate hydrolysis which occurs prior to release of AdoMet from the enzyme. In Chlorobium limicola (strain DSM 245 / NBRC 103803 / 6330), this protein is S-adenosylmethionine synthase.